A 448-amino-acid chain; its full sequence is Asparagine--tRNA ligase (448 aa).

Belongs to the class-II aminoacyl-tRNA synthetase family. Homodimer.

Its subcellular location is the cytoplasm. The enzyme catalyses tRNA(Asn) + L-asparagine + ATP = L-asparaginyl-tRNA(Asn) + AMP + diphosphate + H(+). The chain is Asparagine--tRNA ligase from Streptococcus thermophilus (strain ATCC BAA-250 / LMG 18311).